The chain runs to 161 residues: Cytochrome c-type biogenesis protein CcmE (161 aa).

Residues 1–8 (MNPRRQKR) lie on the Cytoplasmic side of the membrane. Residues 9–29 (LGIILAILIGVSATIGLMIYA) traverse the membrane as a helical; Signal-anchor for type II membrane protein segment. Residues 30–161 (LNQNMDLFYT…SEEQKQGSGQ (132 aa)) are Periplasmic-facing. Residues histidine 129 and tyrosine 133 each coordinate heme.

The protein belongs to the CcmE/CycJ family.

The protein resides in the cell inner membrane. Heme chaperone required for the biogenesis of c-type cytochromes. Transiently binds heme delivered by CcmC and transfers the heme to apo-cytochromes in a process facilitated by CcmF and CcmH. The sequence is that of Cytochrome c-type biogenesis protein CcmE from Vibrio vulnificus (strain CMCP6).